A 512-amino-acid chain; its full sequence is Citrate synthase (512 aa).

Residues H288, H327, and D383 contribute to the active site. The segment at 483–512 (AIPKTATGSKSQLSASIEQSFGEKISPQSH) is disordered. A compositionally biased stretch (polar residues) spans 488 to 501 (ATGSKSQLSASIEQ).

The protein belongs to the citrate synthase family.

It localises to the cytoplasm. The catalysed reaction is oxaloacetate + acetyl-CoA + H2O = citrate + CoA + H(+). It functions in the pathway carbohydrate metabolism; tricarboxylic acid cycle; isocitrate from oxaloacetate: step 1/2. This Dictyostelium discoideum (Social amoeba) protein is Citrate synthase (gltA).